Reading from the N-terminus, the 188-residue chain is Crossover junction endodeoxyribonuclease RuvC (188 aa).

Active-site residues include aspartate 7, glutamate 68, and aspartate 141. Mg(2+) is bound by residues aspartate 7, glutamate 68, and aspartate 141.

It belongs to the RuvC family. As to quaternary structure, homodimer which binds Holliday junction (HJ) DNA. The HJ becomes 2-fold symmetrical on binding to RuvC with unstacked arms; it has a different conformation from HJ DNA in complex with RuvA. In the full resolvosome a probable DNA-RuvA(4)-RuvB(12)-RuvC(2) complex forms which resolves the HJ. Mg(2+) serves as cofactor.

It is found in the cytoplasm. It catalyses the reaction Endonucleolytic cleavage at a junction such as a reciprocal single-stranded crossover between two homologous DNA duplexes (Holliday junction).. Its function is as follows. The RuvA-RuvB-RuvC complex processes Holliday junction (HJ) DNA during genetic recombination and DNA repair. Endonuclease that resolves HJ intermediates. Cleaves cruciform DNA by making single-stranded nicks across the HJ at symmetrical positions within the homologous arms, yielding a 5'-phosphate and a 3'-hydroxyl group; requires a central core of homology in the junction. The consensus cleavage sequence is 5'-(A/T)TT(C/G)-3'. Cleavage occurs on the 3'-side of the TT dinucleotide at the point of strand exchange. HJ branch migration catalyzed by RuvA-RuvB allows RuvC to scan DNA until it finds its consensus sequence, where it cleaves and resolves the cruciform DNA. This is Crossover junction endodeoxyribonuclease RuvC from Mycobacterium avium (strain 104).